The following is a 329-amino-acid chain: Malate dehydrogenase (329 aa).

12–18 contacts NAD(+); sequence GAAGQIG. Positions 95 and 101 each coordinate substrate. Residues asparagine 108, glutamine 115, and 132-134 contribute to the NAD(+) site; that span reads VGN. Substrate is bound by residues asparagine 134 and arginine 165. Histidine 190 serves as the catalytic Proton acceptor.

This sequence belongs to the LDH/MDH superfamily. MDH type 2 family.

The enzyme catalyses (S)-malate + NAD(+) = oxaloacetate + NADH + H(+). In terms of biological role, catalyzes the reversible oxidation of malate to oxaloacetate. The sequence is that of Malate dehydrogenase from Herminiimonas arsenicoxydans.